Reading from the N-terminus, the 394-residue chain is Small RNA 2'-O-methyltransferase (394 aa).

S-adenosyl-L-methionine contacts are provided by D78 and S114. Positions 132, 135, 136, and 181 each coordinate Mg(2+).

It belongs to the methyltransferase superfamily. HEN1 family. It depends on Mg(2+) as a cofactor.

It localises to the cytoplasm. The enzyme catalyses small RNA 3'-end nucleotide + S-adenosyl-L-methionine = small RNA 3'-end 2'-O-methylnucleotide + S-adenosyl-L-homocysteine + H(+). Methyltransferase that adds a 2'-O-methyl group at the 3'-end of piRNAs, a class of 24 to 30 nucleotide RNAs that are generated by a Dicer-independent mechanism and are primarily derived from transposons and other repeated sequence elements. This probably protects the 3'-end of piRNAs from uridylation activity and subsequent degradation. Stabilization of piRNAs is essential for gametogenesis. The sequence is that of Small RNA 2'-O-methyltransferase (Henmt1) from Rattus norvegicus (Rat).